Here is a 280-residue protein sequence, read N- to C-terminus: AYGVVYKARDIETNEDIALKKIRLEQEDEGVPSTAIREISLLKEMHHENIVNLKDVVHREKRLYLVFEYLDLDLKKHMDSCPEFSQDLHMVKMFLCQILRGVAYCHSHRVLHRDLKPQNLLIDRGSNTIKLADFGLARAFGIPVRTFTHEVVTLWYRAPEVLLGSRHYSTPVDVWSVGCIFAEMVNQKPLFPGDSEIDELHKIFRIIGTPNEDIWPGVTSLPDFKSSFPKWPPKELATIVPNLGATGLDLLCKMLQLDPSKRITAKKALEHEYFKDIVLP.

ATP-binding positions include 1–5 and K20; that span reads AYGVV. In terms of domain architecture, Protein kinase spans 1–274; that stretch reads AYGVVYKARD…AKKALEHEYF (274 aa). Phosphotyrosine is present on Y2. D114 functions as the Proton acceptor in the catalytic mechanism. A Phosphothreonine; by CAK modification is found at T148.

It belongs to the protein kinase superfamily. CMGC Ser/Thr protein kinase family. CDC2/CDKX subfamily.

It catalyses the reaction L-seryl-[protein] + ATP = O-phospho-L-seryl-[protein] + ADP + H(+). It carries out the reaction L-threonyl-[protein] + ATP = O-phospho-L-threonyl-[protein] + ADP + H(+). The enzyme catalyses [DNA-directed RNA polymerase] + ATP = phospho-[DNA-directed RNA polymerase] + ADP + H(+). Its activity is regulated as follows. Phosphorylation at Tyr-2 inactivates the enzyme, while phosphorylation at Thr-148 activates it. Plays a key role in the control of the eukaryotic cell cycle. This Antirrhinum majus (Garden snapdragon) protein is Cell division control protein 2 homolog B (CDC2B).